We begin with the raw amino-acid sequence, 171 residues long: Spiderine-2a (171 aa).

An N-terminal signal peptide occupies residues 1 to 18; sequence MKFALVLLGVCAFYLVNA. Residues 19–58 constitute a propeptide, removed in mature form; it reads TGDLETELEASELQELQEALDLIAETPLESLEAEELEEAR. Positions 59–104 are linear cationic cytotoxin domain; that stretch reads KFKLPKINWGKLASKAKDVYKKGQKLAKNKNVKKALKYGKQLAENL. The Oxytoxin-type inhibitor cystine knot (ICK) domain occupies 118–171; it reads NNKCWAIGTRCTDDCDCCPEHHCHCPAKSWTFGLIPCSCQVTESDKVNKCPPAE. Intrachain disulfides connect C121-C135, C128-C140, C132-C167, C134-C156, and C142-C154.

Post-translationally, disulfide bonds. As to expression, expressed by the venom gland.

The protein localises to the secreted. In terms of biological role, has antimicrobial, insecticidal, cytolytic and cytotoxic activity. This Oxyopes takobius (Lynx spider) protein is Spiderine-2a.